Reading from the N-terminus, the 73-residue chain is uncharacterized protein (73 aa).

The first 28 residues, 1 to 28, serve as a signal peptide directing secretion; it reads MKFLLSVIAGLLILALYLFWKVQPPVWI.

This is an uncharacterized protein from Bacillus subtilis (strain 168).